We begin with the raw amino-acid sequence, 513 residues long: Cytochrome P450 monooxygenase sthF (513 aa).

A run of 2 helical transmembrane segments spans residues 13 to 33 (FPSL…YIFI) and 212 to 232 (MLHP…IILL). Position 452 (Cys-452) interacts with heme.

The protein belongs to the cytochrome P450 family. Heme serves as cofactor.

It localises to the membrane. It carries out the reaction dehydroprobetaenone I + NADPH + O2 + H(+) = epoxybetaenone + NADP(+) + H2O. It catalyses the reaction dehydroprobetaenone I + 3 NADPH + 3 O2 + 3 H(+) = betaenone C + 3 NADP(+) + 3 H2O. The catalysed reaction is probetaenone I + 3 NADPH + 3 O2 + 3 H(+) = betaenone B + 3 NADP(+) + 3 H2O. The protein operates within mycotoxin biosynthesis. In terms of biological role, cytochrome P450 monooxygenase; part of the gene cluster that mediates the biosynthesis of the phytotoxin stemphyloxin II. The first step of the pathway is the synthesis of dehydroprobetaenone I by the polyketide synthase sthA and the enoyl reductase sthE via condensation of one acetyl-CoA starter unit with 7 malonyl-CoA units and 5 methylations. The C-terminal reductase (R) domain of sthA catalyzes the reductive release of the polyketide chain. Because sthA lacks a designated enoylreductase (ER) domain, the required activity is provided the enoyl reductase sthE. The short-chain dehydrogenase/reductase sthC then catalyzes reduction of dehydroprobetaenone I to probetaenone I. The cytochrome P450 monooxygenase sthF catalyzes successive epoxidation, oxidation (resulting from epoxide opening) and hydroxylation to install a tertiary alcohol in the decaline ring to yield betaenone C from dehydroprobetaenone I and betaenone B from probetaenone I. The FAD-linked oxidoreductase sthB is responsible for the conversion of betaenone C to betaenone A via an intramolecular aldol reaction between C-1 and C-17 to form the bridged tricyclic system in betaenone A. Finally, the cytochrome P450 monooxygenase sthD catalyzes the hydroxylation of C-15 to afford the final metabolite stemphyloxin II. This chain is Cytochrome P450 monooxygenase sthF, found in Phaeosphaeria nodorum (strain SN15 / ATCC MYA-4574 / FGSC 10173) (Glume blotch fungus).